Here is a 66-residue protein sequence, read N- to C-terminus: Jindongenin-1a (66 aa).

A signal peptide spans 1–22 (MFTLKKPLLLLFFLGTVSLSLC). A propeptide spanning residues 23-40 (EQERAADDDEGEVIEEEV) is cleaved from the precursor. Residues Cys60 and Cys66 are joined by a disulfide bond.

As to expression, expressed by the skin glands.

It is found in the secreted. Its function is as follows. Displays broad-spectrum antibacterial activity against a range of Gram-positive and Gram-negative bacteria. Also displays antifungal activity against C.albicans ATCC 2002. Has low hemolytic activity, low cytotoxicity and low antioxidant activity. The chain is Jindongenin-1a from Amolops jingdongensis (Chinese torrent frog).